A 122-amino-acid polypeptide reads, in one-letter code: Small ribosomal subunit protein uS10y (122 aa).

The protein belongs to the universal ribosomal protein uS10 family.

This is Small ribosomal subunit protein uS10y (RPS20B) from Arabidopsis thaliana (Mouse-ear cress).